Reading from the N-terminus, the 523-residue chain is MSQQVIIFDTTLRDGEQALQASLSVKEKLQIALALERMGVDVMEVGFPVSSPGDFESVQTIARQVKNSRVCALARCVEKDIDVAAESLKVAEAFRIHTFIATSPMHIATKLRSTLDEVIERAIYMVKRARNYTDDVEFSCEDAGRTPIADLARVVEAAINAGATTINIPDTVGYTMPFEFAGIISGLYERVPNIDKAIISVHTHDDLGLAVGNSLAAVHAGARQVEGAMNGIGERAGNCSLEEVIMAIKVRKDILNVHTAINHQEIWRTSQLVSQICNMPIPANKAIVGSGAFAHSSGIHQDGVLKNRENYEIMTPESIGLNQIQLNLTSRSGRAAVKHRMDEMGYKESEYNLDNLYDAFLKLADKKGQVFDYDLEALAFIGKQQEEPEHFRLDYFSVQSGSNDIATAAVKLACGEEVKAEVANGNGPVDAVYQAINRITDYNVELVKYSLTAKGHGKDALGQVDIVANYNGRRFHGVGLATDIVESSAKAMVHVLNNIWRAAEVEKELQRKAQHNENNKETV.

The Pyruvate carboxyltransferase domain occupies 5–267 (VIIFDTTLRD…HTAINHQEIW (263 aa)). Mn(2+)-binding residues include Asp-14, His-202, His-204, and Asn-238. Residues 392–523 (RLDYFSVQSG…QHNENNKETV (132 aa)) form a regulatory domain region.

This sequence belongs to the alpha-IPM synthase/homocitrate synthase family. LeuA type 1 subfamily. As to quaternary structure, homodimer. Requires Mn(2+) as cofactor.

It localises to the cytoplasm. It carries out the reaction 3-methyl-2-oxobutanoate + acetyl-CoA + H2O = (2S)-2-isopropylmalate + CoA + H(+). Its pathway is amino-acid biosynthesis; L-leucine biosynthesis; L-leucine from 3-methyl-2-oxobutanoate: step 1/4. Its function is as follows. Catalyzes the condensation of the acetyl group of acetyl-CoA with 3-methyl-2-oxobutanoate (2-ketoisovalerate) to form 3-carboxy-3-hydroxy-4-methylpentanoate (2-isopropylmalate). The protein is 2-isopropylmalate synthase of Escherichia coli O127:H6 (strain E2348/69 / EPEC).